The sequence spans 87 residues: uncharacterized protein (87 aa).

The helical transmembrane segment at 48–70 (GIYIPHTLIFWMCPRAMGTAITF) threads the bilayer.

It is found in the host membrane. This is an uncharacterized protein from Gallid herpesvirus 2 (strain Chicken/Md5/ATCC VR-987) (GaHV-2).